Here is a 366-residue protein sequence, read N- to C-terminus: Chorismate synthase (366 aa).

Residues arginine 48 and arginine 54 each contribute to the NADP(+) site. FMN-binding positions include 132 to 134 (RSS), 244 to 245 (NA), glycine 289, 304 to 308 (KPTSS), and arginine 330.

Belongs to the chorismate synthase family. Homotetramer. Requires FMNH2 as cofactor.

It catalyses the reaction 5-O-(1-carboxyvinyl)-3-phosphoshikimate = chorismate + phosphate. It functions in the pathway metabolic intermediate biosynthesis; chorismate biosynthesis; chorismate from D-erythrose 4-phosphate and phosphoenolpyruvate: step 7/7. Functionally, catalyzes the anti-1,4-elimination of the C-3 phosphate and the C-6 proR hydrogen from 5-enolpyruvylshikimate-3-phosphate (EPSP) to yield chorismate, which is the branch point compound that serves as the starting substrate for the three terminal pathways of aromatic amino acid biosynthesis. This reaction introduces a second double bond into the aromatic ring system. The polypeptide is Chorismate synthase (Methylobacterium radiotolerans (strain ATCC 27329 / DSM 1819 / JCM 2831 / NBRC 15690 / NCIMB 10815 / 0-1)).